Consider the following 155-residue polypeptide: 3-hydroxyacyl-[acyl-carrier-protein] dehydratase FabZ (155 aa).

Residue histidine 57 is part of the active site.

Belongs to the thioester dehydratase family. FabZ subfamily.

The protein localises to the cytoplasm. The enzyme catalyses a (3R)-hydroxyacyl-[ACP] = a (2E)-enoyl-[ACP] + H2O. Functionally, involved in unsaturated fatty acids biosynthesis. Catalyzes the dehydration of short chain beta-hydroxyacyl-ACPs and long chain saturated and unsaturated beta-hydroxyacyl-ACPs. The polypeptide is 3-hydroxyacyl-[acyl-carrier-protein] dehydratase FabZ (Sorangium cellulosum (strain So ce56) (Polyangium cellulosum (strain So ce56))).